Here is a 221-residue protein sequence, read N- to C-terminus: Translation initiation factor 6 (221 aa).

The protein belongs to the eIF-6 family.

In terms of biological role, binds to the 50S ribosomal subunit and prevents its association with the 30S ribosomal subunit to form the 70S initiation complex. This Methanospirillum hungatei JF-1 (strain ATCC 27890 / DSM 864 / NBRC 100397 / JF-1) protein is Translation initiation factor 6.